A 340-amino-acid polypeptide reads, in one-letter code: Armadillo repeat-containing protein 12 (340 aa).

Residues 1–101 are interaction with TBC1D15; it reads MGKTIPRFLE…NITRCVYLLE (101 aa). ARM repeat units follow at residues 100–139, 179–218, and 278–318; these read LEAEASSCTMDDIDLVADMLDEKDNSVKIQALNALKAFSG, LPDYVHPQLRRVMPALMEIIQSDCILAQVQAVRLLSYLAQ, and SLHE…SLQC. Positions 321-340 are disordered; it reads DLGSRPSSCRPSHSCFKTGK. Residues 324–340 are compositionally biased toward low complexity; sequence SRPSSCRPSHSCFKTGK.

In terms of assembly, interacts with TBC1D15, TBC1D21, GK2 and IMMT. Interacts with VDAC2 and VDAC3 in a TBC1D21-dependent manner. Interacts (via ARM domains) with RBBP4. Testis-specific.

The protein localises to the nucleus. Its subcellular location is the mitochondrion outer membrane. Its function is as follows. Essential for male fertility and sperm mitochondrial sheath formation. Required for proper mitochondrial elongation and coiling along the flagellum during the formation of the mitochondrial sheath. Facilitates the growth and aggressiveness of neuroblastoma cells. Increases the EZH2 activity and H3K27me3 levels in a RBBP4-dependent manner, and facilitates the enrichment of polycomb repressive complex 2 and H3K27me3 on gene promoters, resulting in transcriptional repression of tumor suppressors affecting the proliferation, invasion, and metastasis of tumor cells. The protein is Armadillo repeat-containing protein 12 (Armc12) of Mus musculus (Mouse).